A 350-amino-acid chain; its full sequence is Succinylglutamate desuccinylase (350 aa).

Residues H71, E74, and H169 each contribute to the Zn(2+) site. E233 is a catalytic residue.

The protein belongs to the AspA/AstE family. Succinylglutamate desuccinylase subfamily. The cofactor is Zn(2+).

It catalyses the reaction N-succinyl-L-glutamate + H2O = L-glutamate + succinate. It functions in the pathway amino-acid degradation; L-arginine degradation via AST pathway; L-glutamate and succinate from L-arginine: step 5/5. Functionally, transforms N(2)-succinylglutamate into succinate and glutamate. This is Succinylglutamate desuccinylase from Pseudoalteromonas atlantica (strain T6c / ATCC BAA-1087).